Reading from the N-terminus, the 112-residue chain is UPF0375 protein R05A10.4 (112 aa).

The first 19 residues, 1–19 (MNLSIFSAIIFSITIASSA), serve as a signal peptide directing secretion. Asparagine 59 carries N-linked (GlcNAc...) asparagine glycosylation.

The protein belongs to the UPF0375 family.

It is found in the secreted. The chain is UPF0375 protein R05A10.4 from Caenorhabditis elegans.